Consider the following 269-residue polypeptide: 5'-nucleotidase SurE (269 aa).

D8, D9, S40, and N95 together coordinate a divalent metal cation.

The protein belongs to the SurE nucleotidase family. It depends on a divalent metal cation as a cofactor.

The protein localises to the cytoplasm. The enzyme catalyses a ribonucleoside 5'-phosphate + H2O = a ribonucleoside + phosphate. Functionally, nucleotidase that shows phosphatase activity on nucleoside 5'-monophosphates. This is 5'-nucleotidase SurE from Nitratidesulfovibrio vulgaris (strain DSM 19637 / Miyazaki F) (Desulfovibrio vulgaris).